The chain runs to 148 residues: FAD synthase (148 aa).

Residues 11–12, 16–19, asparagine 94, and tyrosine 121 each bind ATP; these read TF and HPGH.

The protein belongs to the archaeal FAD synthase family. Homodimer. Requires a divalent metal cation as cofactor.

The enzyme catalyses FMN + ATP + H(+) = FAD + diphosphate. It participates in cofactor biosynthesis; FAD biosynthesis; FAD from FMN: step 1/1. In terms of biological role, catalyzes the transfer of the AMP portion of ATP to flavin mononucleotide (FMN) to produce flavin adenine dinucleotide (FAD) coenzyme. This chain is FAD synthase, found in Methanoregula boonei (strain DSM 21154 / JCM 14090 / 6A8).